The following is a 280-amino-acid chain: MAIRKYKPTTPGRRQSSVSMFEEITRSTPEKSLVRPLPKKGGRNVHGHITVRHKGGGHKRQYRLIDFRRNDKDGIPAKVAHIEYDPNRTANIALLHYVDGEKRYIIAPKGLQQGQMIESGVNADIKVGNNLPLRNIPAGTTIHCVELKPGAGAKLARSAGASIQLLGKAGKYAVLRMPSSEIRRVDIRCRATVGEVGNADQINIRWGKAGRMRWKGVRPTVRGVVMNPVDHPHGGGEGKTSGGRHPVSPWGKKEGRTRNPNRYSNNMIVQRRRTNKSKKR.

Disordered stretches follow at residues M1–G47 and V224–R280. The span at E23–L33 shows a compositional bias: basic and acidic residues. Residues L37–G47 show a composition bias toward basic residues. Residues R258–I268 are compositionally biased toward polar residues. The segment covering Q270 to R280 has biased composition (basic residues).

Belongs to the universal ribosomal protein uL2 family. Part of the 50S ribosomal subunit. Forms a bridge to the 30S subunit in the 70S ribosome.

Its function is as follows. One of the primary rRNA binding proteins. Required for association of the 30S and 50S subunits to form the 70S ribosome, for tRNA binding and peptide bond formation. It has been suggested to have peptidyltransferase activity; this is somewhat controversial. Makes several contacts with the 16S rRNA in the 70S ribosome. This is Large ribosomal subunit protein uL2 from Corynebacterium diphtheriae (strain ATCC 700971 / NCTC 13129 / Biotype gravis).